The sequence spans 345 residues: uncharacterized protein (345 aa).

The protein belongs to the cycloisomerase 2 family.

This is an uncharacterized protein from Staphylococcus saprophyticus subsp. saprophyticus (strain ATCC 15305 / DSM 20229 / NCIMB 8711 / NCTC 7292 / S-41).